The chain runs to 388 residues: Pepsin A-2/A-3 (388 aa).

The first 15 residues, 1-15, serve as a signal peptide directing secretion; it reads MKWLLLLGLVALSEC. 2 consecutive propeptides (activation peptide) follow at residues 16-40 and 41-62; these read IIHKVPLVRKKSLRRNLSEHGLLKD and FLKKHNFNPASKYFPQAEAPTL. Residues 76-385 form the Peptidase A1 domain; the sequence is YFGTIGIGTP…DRANNQVGLA (310 aa). Asp94 is a catalytic residue. Cys107 and Cys112 are oxidised to a cystine. Residue Ser130 is modified to Phosphoserine. Residues Cys268 and Cys272 are joined by a disulfide bond. The active site involves Asp277. Cys311 and Cys344 form a disulfide bridge.

It belongs to the peptidase A1 family. In terms of processing, pepsin A-2 is phosphorylated, but not pepsin A-3. Each pepsinogen is converted to corresponding pepsin at pH 2.0 in part as a result of the release of a 47 AA activation segment and in part as a result of stepwise proteolytic cleavage via an intermediate form(s).

Its subcellular location is the secreted. It catalyses the reaction Preferential cleavage: hydrophobic, preferably aromatic, residues in P1 and P1' positions. Cleaves 1-Phe-|-Val-2, 4-Gln-|-His-5, 13-Glu-|-Ala-14, 14-Ala-|-Leu-15, 15-Leu-|-Tyr-16, 16-Tyr-|-Leu-17, 23-Gly-|-Phe-24, 24-Phe-|-Phe-25 and 25-Phe-|-Tyr-26 bonds in the B chain of insulin.. Its function is as follows. Shows particularly broad specificity; although bonds involving phenylalanine and leucine are preferred, many others are also cleaved to some extent. The chain is Pepsin A-2/A-3 from Macaca fuscata fuscata (Japanese macaque).